Here is a 267-residue protein sequence, read N- to C-terminus: MAPVPELTSEMMAYYSDENDLFFEADGPEKMKGSLQNLSHSFLGDEGIQLQISHQPDNKSLRHAVSVIVAMEKLKKISFACSQPLQDEDLKSLFCCIFEEEPIICDTWDDGFVCDAAIQSQDYTFRDISQKSLVLSGSYELRALHLNGQNMNQQVVFRMSFVHGEENSKKIPVVLCIKKNNLYLSCVMKDGKPTLQLEMLDPKVYPKKKMEKRFVFNKTEIKGNVEFESSQFPNWYISTSQAEEMPVFLGNTKGGQDITDFIMESAS.

The propeptide occupies 1–115 (MAPVPELTSE…DTWDDGFVCD (115 aa)).

Belongs to the IL-1 family. In terms of assembly, monomer. In its precursor form, weakly interacts with full-length MEFV; the mature cytokine does not interact at all. Interacts with integrins ITGAV:ITGBV and ITGA5:ITGB1; integrin-binding is required for IL1B signaling. Interacts with cargo receptor TMED10; the interaction is direct and is required for the secretion of IL1B mature form. Interacts with HSP90AB1; the interaction facilitates cargo translocation into the ERGIC. Interacts with HSP90B1; the interaction facilitates cargo translocation into the ERGIC.

It localises to the cytoplasm. It is found in the cytosol. Its subcellular location is the secreted. The protein localises to the lysosome. The protein resides in the extracellular exosome. Its function is as follows. Potent pro-inflammatory cytokine. Initially discovered as the major endogenous pyrogen, induces prostaglandin synthesis, neutrophil influx and activation, T-cell activation and cytokine production, B-cell activation and antibody production, and fibroblast proliferation and collagen production. Promotes Th17 differentiation of T-cells. Synergizes with IL12/interleukin-12 to induce IFNG synthesis from T-helper 1 (Th1) cells. Plays a role in angiogenesis by inducing VEGF production synergistically with TNF and IL6. Involved in transduction of inflammation downstream of pyroptosis: its mature form is specifically released in the extracellular milieu by passing through the gasdermin-D (GSDMD) pore. The protein is Interleukin-1 beta (IL1B) of Felis catus (Cat).